Here is a 184-residue protein sequence, read N- to C-terminus: UPF0149 protein Avin_47340 (184 aa).

The protein belongs to the UPF0149 family.

This chain is UPF0149 protein Avin_47340, found in Azotobacter vinelandii (strain DJ / ATCC BAA-1303).